The chain runs to 320 residues: Malate dehydrogenase (320 aa).

NAD(+) contacts are provided by residues 10–15 (GSGMIG) and aspartate 34. Substrate contacts are provided by arginine 83 and arginine 89. Residues asparagine 96 and 119 to 121 (ITN) each bind NAD(+). Residues asparagine 121 and arginine 152 each coordinate substrate. Histidine 176 functions as the Proton acceptor in the catalytic mechanism.

Belongs to the LDH/MDH superfamily. MDH type 3 family.

It carries out the reaction (S)-malate + NAD(+) = oxaloacetate + NADH + H(+). Catalyzes the reversible oxidation of malate to oxaloacetate. The protein is Malate dehydrogenase of Brucella abortus (strain S19).